Consider the following 70-residue polypeptide: Probable rubredoxin HupI (70 aa).

Residues 15–66 (DDRMECGICWHVYDPAEGDPVWQIPPGTPFSNLTEDWRCPNCDALQSKFMRL) enclose the Rubredoxin-like domain. C20, C23, C53, and C56 together coordinate Fe cation.

Belongs to the rubredoxin family. Fe(3+) serves as cofactor.

Functionally, could be an electron transport intermediate in hydrogen oxidation. In Rhizobium leguminosarum bv. viciae, this protein is Probable rubredoxin HupI (hupI).